A 346-amino-acid polypeptide reads, in one-letter code: Very-long-chain 3-oxoacyl-CoA reductase (346 aa).

A helical membrane pass occupies residues 26–46; it reads TASVLLVAGGWFVVSRVWTFL. Residues I71, D126, D134, N153, Y220, K224, I253, and S255 each contribute to the NADP(+) site. Y220 (proton donor) is an active-site residue. K224 acts as the Lowers pKa of active site Tyr in catalysis.

The protein belongs to the short-chain dehydrogenases/reductases (SDR) family.

The protein localises to the endoplasmic reticulum membrane. The catalysed reaction is a very-long-chain (3R)-3-hydroxyacyl-CoA + NADP(+) = a very-long-chain 3-oxoacyl-CoA + NADPH + H(+). Its pathway is lipid metabolism; fatty acid biosynthesis. Functionally, component of the microsomal membrane bound fatty acid elongation system, which produces the 26-carbon very long-chain fatty acids (VLCFA) from palmitate. Catalyzes the reduction of the 3-ketoacyl-CoA intermediate that is formed in each cycle of fatty acid elongation. VLCFAs serve as precursors for ceramide and sphingolipids. The sequence is that of Very-long-chain 3-oxoacyl-CoA reductase from Emericella nidulans (strain FGSC A4 / ATCC 38163 / CBS 112.46 / NRRL 194 / M139) (Aspergillus nidulans).